The chain runs to 78 residues: Small venom protein 2 (78 aa).

The signal sequence occupies residues 1–19 (MKFIVLLGALLALLVAVSA). A propeptide spanning residues 20–42 (DRIAREAPEMESVDEAVLTRQAR) is cleaved from the precursor.

Expressed by the venom gland.

The protein localises to the secreted. The sequence is that of Small venom protein 2 from Pimpla hypochondriaca (Parasitoid wasp).